A 152-amino-acid polypeptide reads, in one-letter code: Transcriptional regulator MraZ (152 aa).

SpoVT-AbrB domains lie at 5-52 (ASAI…PLEA) and 81-124 (AHEC…DEAA).

The protein belongs to the MraZ family. Forms oligomers.

The protein resides in the cytoplasm. It localises to the nucleoid. In Shewanella loihica (strain ATCC BAA-1088 / PV-4), this protein is Transcriptional regulator MraZ.